Reading from the N-terminus, the 205-residue chain is SREBP regulating gene protein (205 aa).

Over 1–16 (MALYVSMVWRKILRKR) the chain is Cytoplasmic. A helical membrane pass occupies residues 17–35 (WVLGVVFGLSLIYFLTSTF). Over 36 to 205 (KQEERTVRDR…GESPPELLPI (170 aa)) the chain is Lumenal. N-linked (GlcNAc...) asparagine glycosylation is present at Asn67.

It belongs to the SPRING family.

It localises to the golgi apparatus membrane. Positively regulates hepatic SREBP signaling pathway by modulating the proper localization of SCAP (SREBP cleavage-activating protein) to the endoplasmic reticulum, thereby controlling the level of functional SCAP. In Xenopus laevis (African clawed frog), this protein is SREBP regulating gene protein.